Reading from the N-terminus, the 339-residue chain is D-alanine--D-alanine ligase (339 aa).

One can recognise an ATP-grasp domain in the interval 115-327 (KHIFRSLGID…FNELVKIIIE (213 aa)). Position 142–211 (142–211 (KIDYPYVLKP…EEYIPGIELH (70 aa))) interacts with ATP. Residues D279, E293, and N295 each coordinate Mg(2+).

This sequence belongs to the D-alanine--D-alanine ligase family. Mg(2+) is required as a cofactor. It depends on Mn(2+) as a cofactor.

The protein localises to the cytoplasm. It catalyses the reaction 2 D-alanine + ATP = D-alanyl-D-alanine + ADP + phosphate + H(+). It functions in the pathway cell wall biogenesis; peptidoglycan biosynthesis. Cell wall formation. This Wolbachia sp. subsp. Brugia malayi (strain TRS) protein is D-alanine--D-alanine ligase.